The following is a 1173-amino-acid chain: AT-rich interactive domain-containing protein 5B (1173 aa).

Lys130 is covalently cross-linked (Glycyl lysine isopeptide (Lys-Gly) (interchain with G-Cter in SUMO2)). A disordered region spans residues 249-283 (PNLKGRPRKKKPCPQRRDSFSGGKDPNNNSDGKSV). The segment covering 253 to 262 (GRPRKKKPCP) has biased composition (basic residues). Ser267 is modified (phosphoserine). Residues 322 to 414 (RADEQAFLVA…LILPYERFIK (93 aa)) form the ARID domain. An N6,N6-dimethyllysine modification is found at Lys340. Residues 416-607 (EEDKPLPPIK…QPPLANQSEV (192 aa)) are disordered. A Glycyl lysine isopeptide (Lys-Gly) (interchain with G-Cter in SUMO2) cross-link involves residue Lys449. Basic and acidic residues predominate over residues 450–462 (HEISKSKKEKENA). Residues Lys497 and Lys499 each participate in a glycyl lysine isopeptide (Lys-Gly) (interchain with G-Cter in SUMO2) cross-link. Positions 547–557 (SAPLAPTPGTG) are enriched in low complexity. Residues 593–605 (GFSTTQPPLANQS) show a composition bias toward polar residues. Residues Lys763 and Lys769 each participate in a glycyl lysine isopeptide (Lys-Gly) (interchain with G-Cter in SUMO2) cross-link. Disordered stretches follow at residues 777-802 (EPRF…VEKR), 877-924 (KKSA…GTSQ), and 936-965 (HPKA…KPHP). Basic residues predominate over residues 782-796 (FSKHHLSPSKKSRGR). Residues Lys878, Lys901, Lys905, and Lys920 each participate in a glycyl lysine isopeptide (Lys-Gly) (interchain with G-Cter in SUMO2) cross-link. Residues Lys973, Lys985, and Lys998 each participate in a glycyl lysine isopeptide (Lys-Gly) (interchain with G-Cter in SUMO2) cross-link. Ser1017 carries the phosphoserine modification. Residues 1017-1055 (SPLDPAKEVSGKEKASEQESEGSKAAHSGHSGGTSEGHK) form a disordered region. Residues 1021-1040 (PAKEVSGKEKASEQESEGSK) show a composition bias toward basic and acidic residues. Glycyl lysine isopeptide (Lys-Gly) (interchain with G-Cter in SUMO2) cross-links involve residues Lys1040 and Lys1055. Ser1118 is subject to Phosphoserine.

The protein belongs to the ARID5B family. In terms of processing, methylation at Lys-340 prevents DNA-binding. Demethylation by PHF2 promotes recruitment of the PHF2-ARID5B complex to promoters.

It localises to the nucleus. Functionally, transcription coactivator that binds to the 5'-AATA[CT]-3' core sequence and plays a key role in adipogenesis and liver development. Acts by forming a complex with phosphorylated PHF2, which mediates demethylation at Lys-340, leading to target the PHF2-ARID5B complex to target promoters, where PHF2 mediates demethylation of dimethylated 'Lys-9' of histone H3 (H3K9me2), followed by transcription activation of target genes. The PHF2-ARID5B complex acts as a coactivator of HNF4A in liver. Required for adipogenesis: regulates triglyceride metabolism in adipocytes by regulating expression of adipogenic genes. Overexpression leads to induction of smooth muscle marker genes, suggesting that it may also act as a regulator of smooth muscle cell differentiation and proliferation. The chain is AT-rich interactive domain-containing protein 5B (ARID5B) from Bos taurus (Bovine).